We begin with the raw amino-acid sequence, 415 residues long: MNRTVQKLLPWLTASAQDVEKVRNESIRLDPILMVAVLALLAWGLVMVTSASMELGERFGNPFFFVIRQTIAVVIGASITVWLVLRQPIALWVEYKLWILIASLLLLLVVLLPGIGHSVNGANRWIPLGPVNIQVSEFARLGLIIWMAGYIATHTIKLQNRITGMLGPGVVIFAASLLLLLQPDFGTTAVLAATLFAMAWLARAQWQMMVGSTLVMGVLGVFVVLSEQYRIERLLSFSNPFADPFGHGYQLANALIAIGTGGVWGRGLGESIQKLSYLPEAHTDFIFAVLAEELGLIGVIALIGLYGLIVWRGFVIANMAWKENQIAGAALAWGISVWIGMQALINMGVNMGVLPTKGLTLPLMSYGGSAMIVALISLGFLMRVHHEAAMVAELREAQMTKRQQDASIRTKEVLS.

The next 11 helical transmembrane spans lie at 31 to 51 (PILM…VTSA), 63 to 83 (FFFV…TVWL), 97 to 117 (LWIL…GIGH), 133 to 153 (IQVS…YIAT), 162 to 182 (ITGM…LLLQ), 185 to 205 (FGTT…ARAQ), 206 to 226 (WQMM…VVLS), 245 to 265 (FGHG…GVWG), 285 to 305 (FIFA…LIGL), 326 to 346 (IAGA…ALIN), and 361 to 381 (LPLM…LGFL).

Belongs to the SEDS family. FtsW subfamily.

It is found in the cell inner membrane. It carries out the reaction [GlcNAc-(1-&gt;4)-Mur2Ac(oyl-L-Ala-gamma-D-Glu-L-Lys-D-Ala-D-Ala)](n)-di-trans,octa-cis-undecaprenyl diphosphate + beta-D-GlcNAc-(1-&gt;4)-Mur2Ac(oyl-L-Ala-gamma-D-Glu-L-Lys-D-Ala-D-Ala)-di-trans,octa-cis-undecaprenyl diphosphate = [GlcNAc-(1-&gt;4)-Mur2Ac(oyl-L-Ala-gamma-D-Glu-L-Lys-D-Ala-D-Ala)](n+1)-di-trans,octa-cis-undecaprenyl diphosphate + di-trans,octa-cis-undecaprenyl diphosphate + H(+). It functions in the pathway cell wall biogenesis; peptidoglycan biosynthesis. Its function is as follows. Peptidoglycan polymerase that is essential for cell division. The protein is Probable peptidoglycan glycosyltransferase FtsW of Halothiobacillus neapolitanus (strain ATCC 23641 / c2) (Thiobacillus neapolitanus).